Reading from the N-terminus, the 407-residue chain is D-inositol 3-phosphate glycosyltransferase (407 aa).

Residue H2 coordinates 1D-myo-inositol 3-phosphate. Residues 8–9 and G16 contribute to the UDP-N-acetyl-alpha-D-glucosamine site; that span reads QP. Residues 13 to 18, R71, Y104, T128, and R148 each bind 1D-myo-inositol 3-phosphate; that span reads DAGGLN. 2 residues coordinate UDP-N-acetyl-alpha-D-glucosamine: R222 and K227. Mg(2+) is bound by residues Y297, R298, and A300. E310 and E318 together coordinate UDP-N-acetyl-alpha-D-glucosamine. T324 serves as a coordination point for Mg(2+).

Belongs to the glycosyltransferase group 1 family. MshA subfamily. In terms of assembly, homodimer.

The enzyme catalyses 1D-myo-inositol 3-phosphate + UDP-N-acetyl-alpha-D-glucosamine = 1D-myo-inositol 2-acetamido-2-deoxy-alpha-D-glucopyranoside 3-phosphate + UDP + H(+). Functionally, catalyzes the transfer of a N-acetyl-glucosamine moiety to 1D-myo-inositol 3-phosphate to produce 1D-myo-inositol 2-acetamido-2-deoxy-glucopyranoside 3-phosphate in the mycothiol biosynthesis pathway. The polypeptide is D-inositol 3-phosphate glycosyltransferase (Frankia alni (strain DSM 45986 / CECT 9034 / ACN14a)).